The chain runs to 339 residues: DNA-directed RNA polymerase subunit alpha (339 aa).

The tract at residues 1–238 is alpha N-terminal domain (alpha-NTD); it reads MVDPIVTKNW…EQLSIFINFD (238 aa). Residues 250–339 form an alpha C-terminal domain (alpha-CTD) region; the sequence is VEEQKLNENL…KAAPQGAPKV (90 aa).

This sequence belongs to the RNA polymerase alpha chain family. Homodimer. The RNAP catalytic core consists of 2 alpha, 1 beta, 1 beta' and 1 omega subunit. When a sigma factor is associated with the core the holoenzyme is formed, which can initiate transcription.

It carries out the reaction RNA(n) + a ribonucleoside 5'-triphosphate = RNA(n+1) + diphosphate. Functionally, DNA-dependent RNA polymerase catalyzes the transcription of DNA into RNA using the four ribonucleoside triphosphates as substrates. The protein is DNA-directed RNA polymerase subunit alpha of Anaeromyxobacter dehalogenans (strain 2CP-C).